We begin with the raw amino-acid sequence, 445 residues long: tRNA-2-methylthio-N(6)-dimethylallyladenosine synthase (445 aa).

Positions 2-119 constitute an MTTase N-terminal domain; that stretch reads KKLYIRTFGC…LPQLIAERRH (118 aa). 6 residues coordinate [4Fe-4S] cluster: Cys-11, Cys-48, Cys-82, Cys-156, Cys-160, and Cys-163. In terms of domain architecture, Radical SAM core spans 142 to 378; it reads RVEGASAFVS…RIDQQAQAIS (237 aa). Residues 379–442 form the TRAM domain; sequence QAMVGRVERA…PHSLRGEIVT (64 aa).

This sequence belongs to the methylthiotransferase family. MiaB subfamily. Monomer. It depends on [4Fe-4S] cluster as a cofactor.

Its subcellular location is the cytoplasm. The catalysed reaction is N(6)-dimethylallyladenosine(37) in tRNA + (sulfur carrier)-SH + AH2 + 2 S-adenosyl-L-methionine = 2-methylsulfanyl-N(6)-dimethylallyladenosine(37) in tRNA + (sulfur carrier)-H + 5'-deoxyadenosine + L-methionine + A + S-adenosyl-L-homocysteine + 2 H(+). In terms of biological role, catalyzes the methylthiolation of N6-(dimethylallyl)adenosine (i(6)A), leading to the formation of 2-methylthio-N6-(dimethylallyl)adenosine (ms(2)i(6)A) at position 37 in tRNAs that read codons beginning with uridine. The sequence is that of tRNA-2-methylthio-N(6)-dimethylallyladenosine synthase from Aromatoleum aromaticum (strain DSM 19018 / LMG 30748 / EbN1) (Azoarcus sp. (strain EbN1)).